Consider the following 603-residue polypeptide: DNA mismatch repair protein MutL (603 aa).

The protein belongs to the DNA mismatch repair MutL/HexB family.

Functionally, this protein is involved in the repair of mismatches in DNA. It is required for dam-dependent methyl-directed DNA mismatch repair. May act as a 'molecular matchmaker', a protein that promotes the formation of a stable complex between two or more DNA-binding proteins in an ATP-dependent manner without itself being part of a final effector complex. This chain is DNA mismatch repair protein MutL, found in Rhodopseudomonas palustris (strain BisA53).